An 87-amino-acid polypeptide reads, in one-letter code: Small ribosomal subunit protein bS21 (87 aa).

Over residues 35-52 (HYEKPSEKKAREKAEAVR) the composition is skewed to basic and acidic residues. Positions 35–87 (HYEKPSEKKAREKAEAVRRARKLARKKLQREGLLPSKPKPAFGADRRPSAAAR) are disordered. Residues 53–62 (RARKLARKKL) show a composition bias toward basic residues. A compositionally biased stretch (basic and acidic residues) spans 78 to 87 (ADRRPSAAAR).

The sequence is that of Small ribosomal subunit protein bS21 from Rhodopseudomonas palustris (strain ATCC BAA-98 / CGA009).